A 620-amino-acid polypeptide reads, in one-letter code: Probable translation initiation factor IF-2 (620 aa).

Positions 1 to 10 (MSDTDADADT) are enriched in acidic residues. Residues 1-29 (MSDTDADADTDAVSTTETSMNADANANAD) are disordered. Residues 11-29 (DAVSTTETSMNADANANAD) are compositionally biased toward low complexity. The region spanning 33 to 248 (LRTPIVAVLG…VLMGLSQRYM (216 aa)) is the tr-type G domain. The tract at residues 42–49 (GHVDHGKT) is G1. 42–49 (GHVDHGKT) is a binding site for GTP. The G2 stretch occupies residues 67-71 (AITQH). Residues 104–107 (DTPG) are G3. GTP is bound by residues 104–108 (DTPGH) and 158–161 (NKVD). Positions 158-161 (NKVD) are G4. The segment covering 162–183 (TTPGWTPTDGSPIQPTYESQPS) has biased composition (polar residues). The interval 162-185 (TTPGWTPTDGSPIQPTYESQPSAA) is disordered. The interval 226–228 (SAI) is G5.

It belongs to the TRAFAC class translation factor GTPase superfamily. Classic translation factor GTPase family. IF-2 subfamily.

Functionally, function in general translation initiation by promoting the binding of the formylmethionine-tRNA to ribosomes. Seems to function along with eIF-2. This is Probable translation initiation factor IF-2 from Haloquadratum walsbyi (strain DSM 16790 / HBSQ001).